A 453-amino-acid polypeptide reads, in one-letter code: Serine/threonine-protein kinase VRK3 (453 aa).

Positions 30 to 123 (EDGGTQSAVT…QSPQTLKRTR (94 aa)) are disordered. Over residues 33-46 (GTQSAVTPHVSSVP) the composition is skewed to polar residues. Residues 49-64 (RRDLNSSFETSPKKVK) carry the Nuclear localization signal motif. 6 positions are modified to phosphoserine: serine 54, serine 55, serine 59, serine 82, serine 83, and serine 108. A compositionally biased stretch (polar residues) spans 81–101 (DSSGSDNTLTSPDRATGTRSR). The segment covering 109 to 123 (PLSNRQSPQTLKRTR) has biased composition (polar residues). One can recognise a Protein kinase domain in the interval 125–436 (TTSLQALATG…TLRNSLEALL (312 aa)).

The protein belongs to the protein kinase superfamily. CK1 Ser/Thr protein kinase family. VRK subfamily. As to quaternary structure, interacts with DUSP3. Interacts with RAN. Interacts with HSP70/HSPA1A. Phosphorylated at Ser-108 by CDK5; leading to protection of the cell against H2O2-induced apoptosis. Post-translationally, ubiquitinated by RNF144A. Expressed in liver, kidney, muscle, thymus, and bone marrow. Weakly expressed in spleen.

It is found in the nucleus. It localises to the cytoplasm. The catalysed reaction is L-seryl-[protein] + ATP = O-phospho-L-seryl-[protein] + ADP + H(+). Plays a role in the regulation of the cell cycle by phosphorylating the nuclear envelope protein barrier-to-autointegration factor/BAF that is required for disassembly and reassembly, respectively, of the nuclear envelope during mitosis. Under normal physiological conditions, negatively regulates ERK activity along with VHR phosphatase in the nucleus, causing timely and transient action of ERK. Stress conditions activate CDK5 which phosphorylates VRK3 to increase VHR phosphatase activity and suppress prolonged ERK activation that causes cell death. For example, upon glutamate induction, promotes nuclear localization of HSP70/HSPA1A to inhibit ERK activation via VHR phosphatase. The protein is Serine/threonine-protein kinase VRK3 (Vrk3) of Mus musculus (Mouse).